We begin with the raw amino-acid sequence, 311 residues long: Aspartate carbamoyltransferase catalytic subunit (311 aa).

2 residues coordinate carbamoyl phosphate: arginine 59 and threonine 60. Residue lysine 87 participates in L-aspartate binding. The carbamoyl phosphate site is built by arginine 109, histidine 139, and glutamine 142. L-aspartate is bound by residues arginine 172 and arginine 224. Carbamoyl phosphate is bound by residues alanine 265 and proline 266.

The protein belongs to the aspartate/ornithine carbamoyltransferase superfamily. ATCase family. Heterododecamer (2C3:3R2) of six catalytic PyrB chains organized as two trimers (C3), and six regulatory PyrI chains organized as three dimers (R2).

It carries out the reaction carbamoyl phosphate + L-aspartate = N-carbamoyl-L-aspartate + phosphate + H(+). It participates in pyrimidine metabolism; UMP biosynthesis via de novo pathway; (S)-dihydroorotate from bicarbonate: step 2/3. Catalyzes the condensation of carbamoyl phosphate and aspartate to form carbamoyl aspartate and inorganic phosphate, the committed step in the de novo pyrimidine nucleotide biosynthesis pathway. The protein is Aspartate carbamoyltransferase catalytic subunit of Streptococcus pyogenes serotype M12 (strain MGAS2096).